An 86-amino-acid chain; its full sequence is Ferredoxin YfhL (86 aa).

4Fe-4S ferredoxin-type domains lie at 1-29 (MALL…MGDH) and 31-65 (YEIN…KDPA). Residues Cys-9, Cys-12, Cys-15, Cys-19, Cys-38, Cys-41, Cys-50, and Cys-54 each coordinate [4Fe-4S] cluster.

[4Fe-4S] cluster serves as cofactor.

Ferredoxins are iron-sulfur proteins that transfer electrons in a wide variety of metabolic reactions. This chain is Ferredoxin YfhL (yfhL), found in Escherichia coli (strain K12).